Consider the following 485-residue polypeptide: Ataxin-10 (485 aa).

This sequence belongs to the ataxin-10 family.

It localises to the cytoplasm. It is found in the perinuclear region. The protein resides in the midbody. In terms of biological role, may play a role in the regulation of cytokinesis. May play a role in signaling by stimulating protein glycosylation. Induces neuritogenesis by activating the Ras-MAP kinase pathway and is necessary for the survival of cerebellar neurons. Does not appear to play a major role in ciliogenesis. The sequence is that of Ataxin-10 (atxn10) from Xenopus tropicalis (Western clawed frog).